The sequence spans 224 residues: Charged multivesicular body protein 4b (224 aa).

Positions 1 to 23 are disordered; the sequence is MSVFGKLFGAGGGKAGKGGPTPQ. An N-acetylserine modification is found at serine 2. The tract at residues 2–153 is intramolecular interaction with C-terminus; that stretch reads SVFGKLFGAG…EISTAISKPV (152 aa). Residue lysine 6 is modified to N6-acetyllysine. A compositionally biased stretch (gly residues) spans 8–19; sequence FGAGGGKAGKGG. A coiled-coil region spans residues 23 to 183; the sequence is QEAIQRLRDT…EELDKNLLEI (161 aa). The residue at position 114 (lysine 114) is an N6-acetyllysine. The segment at 154–224 is intramolecular interaction with N-terminus; that stretch reads GFGEEFDEDE…KELENWAGSM (71 aa). Phosphoserine is present on residues serine 184 and serine 223. The interval 185–224 is disordered; sequence GPETVPLPNVPSVALPSKPAKKKEEEDDDMKELENWAGSM.

It belongs to the SNF7 family. In terms of assembly, probable core component of the endosomal sorting required for transport complex III (ESCRT-III). ESCRT-III components are thought to multimerize to form a flat lattice on the perimeter membrane of the endosome. Several assembly forms of ESCRT-III may exist that interact and act sequentially. Interacts with CHMP6 and CHMP4C. Interacts with PDCD6IP; the interaction is direct. Interacts with VPS4A; the interaction is direct. Interacts with VPS4B; the interaction is direct. Interacts with CHMP7. Interacts with CFTR; the interaction requires misfolded CFTR. Interacts with PTPN23. Interacts with CC2D1B. Post-translationally, ISGylated. Isgylation weakens its interaction with VPS4A.

It is found in the cytoplasm. It localises to the cytosol. The protein localises to the late endosome membrane. Its subcellular location is the midbody. The protein resides in the nucleus envelope. In terms of biological role, probable core component of the endosomal sorting required for transport complex III (ESCRT-III) which is involved in multivesicular bodies (MVBs) formation and sorting of endosomal cargo proteins into MVBs. MVBs contain intraluminal vesicles (ILVs) that are generated by invagination and scission from the limiting membrane of the endosome and mostly are delivered to lysosomes enabling degradation of membrane proteins, such as stimulated growth factor receptors, lysosomal enzymes and lipids. The MVB pathway appears to require the sequential function of ESCRT-O, -I,-II and -III complexes. ESCRT-III proteins mostly dissociate from the invaginating membrane before the ILV is released. The ESCRT machinery also functions in topologically equivalent membrane fission events, such as the terminal stages of cytokinesis. Together with SPAST, the ESCRT-III complex promotes nuclear envelope sealing and mitotic spindle disassembly during late anaphase. Plays a role in the endosomal sorting pathway. ESCRT-III proteins are believed to mediate the necessary vesicle extrusion and/or membrane fission activities, possibly in conjunction with the AAA ATPase VPS4. When overexpressed, membrane-assembled circular arrays of CHMP4B filaments can promote or stabilize negative curvature and outward budding. CHMP4A/B/C are required for the exosomal release of SDCBP, CD63 and syndecan. Majority of the protein exists in a folded closed conformation. This Mus musculus (Mouse) protein is Charged multivesicular body protein 4b (Chmp4b).